The sequence spans 281 residues: Ribosomal RNA small subunit methyltransferase I (281 aa).

Belongs to the methyltransferase superfamily. RsmI family.

Its subcellular location is the cytoplasm. The catalysed reaction is cytidine(1402) in 16S rRNA + S-adenosyl-L-methionine = 2'-O-methylcytidine(1402) in 16S rRNA + S-adenosyl-L-homocysteine + H(+). In terms of biological role, catalyzes the 2'-O-methylation of the ribose of cytidine 1402 (C1402) in 16S rRNA. The protein is Ribosomal RNA small subunit methyltransferase I of Erythrobacter litoralis (strain HTCC2594).